We begin with the raw amino-acid sequence, 547 residues long: Puff-specific protein Bx42 (547 aa).

The tract at residues 177–343 (AQYIRYTPSQ…AREERAGLRN (167 aa)) is SNW. Phosphoserine occurs at positions 227 and 235. Disordered stretches follow at residues 333 to 398 (RARE…ERDI) and 486 to 547 (QFSG…SKRD). Basic and acidic residues-rich tracts occupy residues 358–398 (EVRE…ERDI) and 526–539 (KRAE…SSHS).

The protein belongs to the SNW family.

Its subcellular location is the nucleus. Its function is as follows. May play a role in chromatin structure and function. This Drosophila melanogaster (Fruit fly) protein is Puff-specific protein Bx42 (Bx42).